Reading from the N-terminus, the 153-residue chain is UPF0225 protein ETA_15740 (153 aa).

Belongs to the UPF0225 family.

This Erwinia tasmaniensis (strain DSM 17950 / CFBP 7177 / CIP 109463 / NCPPB 4357 / Et1/99) protein is UPF0225 protein ETA_15740.